The chain runs to 510 residues: NAD(P)H-quinone oxidoreductase subunit 2 B, chloroplastic (510 aa).

13 helical membrane-spanning segments follow: residues 24–44, 57–77, 99–119, 124–144, 149–169, 183–203, 227–247, 295–315, 323–343, 354–374, 395–415, 418–438, and 484–504; these read LLLFDGSFIFPECILIFGLIL, IPWLYFISSTSLVMSITALLF, IFQFLILLCSTLCIPLSVEYI, MAITEFLLFVLTATLGGMFLC, LITIFVAPECFSLCSYLLSGY, YLLMGGASSSILVHGFSWLYG, PGISIALIFITVGIGFKLSLA, WHLLLEILAILSMILGNLIAI, MLAYSSIGQIGYVIIGIIVGD, YMLFYISMNLGTFACIVLFGL, ALSLALCLLSLGGLPPLAGFF, LHLFWCGWQAGLYFLVSIGLL, and MIVCVIASTILGISMNPIIAI.

This sequence belongs to the complex I subunit 2 family. As to quaternary structure, NDH is composed of at least 16 different subunits, 5 of which are encoded in the nucleus.

The protein localises to the plastid. It is found in the chloroplast thylakoid membrane. The enzyme catalyses a plastoquinone + NADH + (n+1) H(+)(in) = a plastoquinol + NAD(+) + n H(+)(out). The catalysed reaction is a plastoquinone + NADPH + (n+1) H(+)(in) = a plastoquinol + NADP(+) + n H(+)(out). In terms of biological role, NDH shuttles electrons from NAD(P)H:plastoquinone, via FMN and iron-sulfur (Fe-S) centers, to quinones in the photosynthetic chain and possibly in a chloroplast respiratory chain. The immediate electron acceptor for the enzyme in this species is believed to be plastoquinone. Couples the redox reaction to proton translocation, and thus conserves the redox energy in a proton gradient. This is NAD(P)H-quinone oxidoreductase subunit 2 B, chloroplastic from Citrus sinensis (Sweet orange).